The following is a 132-amino-acid chain: MKIIYFSFTGNVRRFIKRTELENTLEITAENCMEPVHEPFIIVTGTIGFGEVPEPVQSFLEVNHQYIRGVAASGNRNWGLNFAKAGRTISEEYNVPLLMKFELHGKNKDVIEFKNKVGNFNENHGREKVQSY.

The protein belongs to the NrdI family.

In terms of biological role, probably involved in ribonucleotide reductase function. The protein is Protein NrdI of Staphylococcus aureus (strain Mu3 / ATCC 700698).